The following is a 300-amino-acid chain: Protoheme IX farnesyltransferase (300 aa).

9 helical membrane passes run Val26–Pro46, Ile54–Ile74, Leu102–Pro122, Leu123–Leu143, Asn150–Thr170, Ala177–Leu197, Val224–Ser244, Trp246–Leu266, and Phe279–Leu299.

This sequence belongs to the UbiA prenyltransferase family. Protoheme IX farnesyltransferase subfamily.

The protein localises to the cell inner membrane. The catalysed reaction is heme b + (2E,6E)-farnesyl diphosphate + H2O = Fe(II)-heme o + diphosphate. The protein operates within porphyrin-containing compound metabolism; heme O biosynthesis; heme O from protoheme: step 1/1. Its function is as follows. Converts heme B (protoheme IX) to heme O by substitution of the vinyl group on carbon 2 of heme B porphyrin ring with a hydroxyethyl farnesyl side group. The protein is Protoheme IX farnesyltransferase of Verminephrobacter eiseniae (strain EF01-2).